Here is a 51-residue protein sequence, read N- to C-terminus: Insulin (51 aa).

3 disulfides stabilise this stretch: cysteine 7–cysteine 37, cysteine 19–cysteine 50, and cysteine 36–cysteine 41.

It belongs to the insulin family. In terms of assembly, heterodimer of a B chain and an A chain linked by two disulfide bonds.

The protein resides in the secreted. Its function is as follows. Insulin decreases blood glucose concentration. It increases cell permeability to monosaccharides, amino acids and fatty acids. It accelerates glycolysis, the pentose phosphate cycle, and glycogen synthesis in liver. The protein is Insulin (INS) of Balaenoptera physalus (Fin whale).